We begin with the raw amino-acid sequence, 284 residues long: MDYIIEDGFHFDIKNGKSPSYLINKYRTGHVIGNVYLLNKYEAFYLYLKNKISIDDEFFNGNIKFYMAYENLIGSGLYVKILNDCFMCRKSRNSRYKKVRFMPDDILLSFKDLYSDDSNIYITVDEEYESVYYSMERIDIKGSRKDDFSAASIDVSSGAYFGMNCPEWFGIDFHGKRLLNDYEIRFLNNDVKSNVDVIYKDLIKRGFIVKSGFKYGSNFRIYKNSMNEHSDYLVNYMDHDLWYVIARAVRLASNVRKRLIISGIIDNDPVYIKIERIKDIKTIL.

Catalysis depends on residues Tyr-222, His-229, and Lys-257.

Belongs to the tRNA-intron endonuclease family. Archaeal long subfamily. Homodimer.

The catalysed reaction is pretRNA = a 3'-half-tRNA molecule with a 5'-OH end + a 5'-half-tRNA molecule with a 2',3'-cyclic phosphate end + an intron with a 2',3'-cyclic phosphate and a 5'-hydroxyl terminus.. In terms of biological role, endonuclease that removes tRNA introns. Cleaves pre-tRNA at the 5'- and 3'-splice sites to release the intron. The products are an intron and two tRNA half-molecules bearing 2',3' cyclic phosphate and 5'-OH termini. Recognizes a pseudosymmetric substrate in which 2 bulged loops of 3 bases are separated by a stem of 4 bp. This chain is tRNA-splicing endonuclease, found in Picrophilus torridus (strain ATCC 700027 / DSM 9790 / JCM 10055 / NBRC 100828 / KAW 2/3).